The following is a 163-amino-acid chain: MGVITSESEYVSSLSAEKLYRGIVEDGNIIYPKALPRFIEKAETLEGDGGPGTIKKLTFVGDFGSTKQHIDMVDRENCAYTYSVYEGIALSDQPLEKIVFEFKLVPTPEEGCIVKSTTKYYTKGDDIELSKDYLEAGIERFEGFTKAVESFLLANPDYNKDSN.

Kinetin contacts are provided by Q68 and Y82. Residues Q68 and Y82 each coordinate N(6)-dimethylallyladenine. Trans-zeatin is bound by residues Q68, Y82, and Y133.

Belongs to the BetVI family. As to quaternary structure, homodimer. In terms of tissue distribution, expressed in nodules, but not in leaves, stems, flowers and roots. Specifically located in the nodule cortex.

In terms of biological role, may be involved in nodule organogenesis rather in the processes related to nitrogen fixation or interactions with the bacteria. May regulate nodulation by controlling the levels of freely available cytokinins. The polypeptide is Nodulin-13 (N13) (Medicago truncatula (Barrel medic)).